A 749-amino-acid chain; its full sequence is Chaperone protein DnaK 1 (749 aa).

Phosphothreonine; by autocatalysis is present on Thr198. Basic and acidic residues-rich tracts occupy residues 643 to 653 (RWDADPWDRSR), 661 to 694 (YDDR…RDRN), and 711 to 724 (PTWE…RDRS). The interval 643 to 749 (RWDADPWDRS…GWDDDDDEWF (107 aa)) is disordered. Residues 740–749 (GWDDDDDEWF) show a composition bias toward acidic residues.

This sequence belongs to the heat shock protein 70 family.

In terms of biological role, acts as a chaperone. The polypeptide is Chaperone protein DnaK 1 (Synechococcus sp. (strain ATCC 27144 / PCC 6301 / SAUG 1402/1) (Anacystis nidulans)).